The chain runs to 294 residues: tRNA pseudouridine synthase B (294 aa).

The active-site Nucleophile is Asp-40.

The protein belongs to the pseudouridine synthase TruB family. Type 1 subfamily.

It carries out the reaction uridine(55) in tRNA = pseudouridine(55) in tRNA. Responsible for synthesis of pseudouridine from uracil-55 in the psi GC loop of transfer RNAs. The chain is tRNA pseudouridine synthase B from Synechococcus elongatus (strain ATCC 33912 / PCC 7942 / FACHB-805) (Anacystis nidulans R2).